Reading from the N-terminus, the 88-residue chain is HssA/B-like protein 9 (88 aa).

Polar residues predominate over residues 1–14 (MSILSALTSISNPM). The interval 1–26 (MSILSALTSISNPMKSSKSSVANGGG) is disordered.

It belongs to the hssA/B family.

The sequence is that of HssA/B-like protein 9 (hssl9) from Dictyostelium discoideum (Social amoeba).